Reading from the N-terminus, the 344-residue chain is L-rhamnose-proton symporter (344 aa).

The next 10 membrane-spanning stretches (helical) occupy residues 4–24 (AITM…CFYA), 38–58 (WSVG…ALLL), 68–88 (FSLS…IGNI), 101–121 (MGIG…TPII), 137–157 (TLLG…AGQL), 175–195 (LVLA…MNAA), 214–234 (LPSY…FCFI), 259–279 (VLLS…YAWG), 290–310 (ISWM…GLVL), and 323–343 (VLSL…MGMA).

This sequence belongs to the L-rhamnose transporter (TC 2.A.7.6) family.

The protein localises to the cell inner membrane. The enzyme catalyses L-rhamnopyranose(in) + H(+)(in) = L-rhamnopyranose(out) + H(+)(out). Functionally, uptake of L-rhamnose across the cytoplasmic membrane with the concomitant transport of protons into the cell (symport system). The protein is L-rhamnose-proton symporter of Escherichia coli O17:K52:H18 (strain UMN026 / ExPEC).